Consider the following 89-residue polypeptide: UPF0213 protein LMOf2365_0181 (89 aa).

A GIY-YIG domain is found at 5-80 (SEHFFYVLKC…KKLSRKNKDA (76 aa)).

This sequence belongs to the UPF0213 family.

This chain is UPF0213 protein LMOf2365_0181, found in Listeria monocytogenes serotype 4b (strain F2365).